The following is an 842-amino-acid chain: Protein translocase subunit SecA (842 aa).

ATP-binding positions include Q85, 103–107 (GEGKT), and D493. Zn(2+) contacts are provided by C825, C827, C836, and H837.

This sequence belongs to the SecA family. As to quaternary structure, monomer and homodimer. Part of the essential Sec protein translocation apparatus which comprises SecA, SecYEG and auxiliary proteins SecDF. Other proteins may also be involved. Requires Zn(2+) as cofactor.

The protein localises to the cell membrane. It localises to the cytoplasm. The enzyme catalyses ATP + H2O + cellular proteinSide 1 = ADP + phosphate + cellular proteinSide 2.. Its function is as follows. Part of the Sec protein translocase complex. Interacts with the SecYEG preprotein conducting channel. Has a central role in coupling the hydrolysis of ATP to the transfer of proteins into and across the cell membrane, serving as an ATP-driven molecular motor driving the stepwise translocation of polypeptide chains across the membrane. This chain is Protein translocase subunit SecA, found in Streptococcus equi subsp. zooepidemicus (strain H70).